A 1080-amino-acid chain; its full sequence is Isoleucine--tRNA ligase (1080 aa).

The 'HIGH' region signature appears at 48–58 (PYASGSIHLGT). Residues 628-632 (KMSKS) carry the 'KMSKS' region motif. ATP is bound at residue Lys-631.

Belongs to the class-I aminoacyl-tRNA synthetase family. IleS type 2 subfamily. In terms of assembly, monomer. Zn(2+) is required as a cofactor.

Its subcellular location is the cytoplasm. It catalyses the reaction tRNA(Ile) + L-isoleucine + ATP = L-isoleucyl-tRNA(Ile) + AMP + diphosphate. Its function is as follows. Catalyzes the attachment of isoleucine to tRNA(Ile). As IleRS can inadvertently accommodate and process structurally similar amino acids such as valine, to avoid such errors it has two additional distinct tRNA(Ile)-dependent editing activities. One activity is designated as 'pretransfer' editing and involves the hydrolysis of activated Val-AMP. The other activity is designated 'posttransfer' editing and involves deacylation of mischarged Val-tRNA(Ile). This Methanopyrus kandleri (strain AV19 / DSM 6324 / JCM 9639 / NBRC 100938) protein is Isoleucine--tRNA ligase.